A 165-amino-acid polypeptide reads, in one-letter code: Endoribonuclease YbeY (165 aa).

The Zn(2+) site is built by H130, H134, and H140.

This sequence belongs to the endoribonuclease YbeY family. The cofactor is Zn(2+).

It localises to the cytoplasm. Its function is as follows. Single strand-specific metallo-endoribonuclease involved in late-stage 70S ribosome quality control and in maturation of the 3' terminus of the 16S rRNA. The chain is Endoribonuclease YbeY from Streptococcus pyogenes serotype M1.